We begin with the raw amino-acid sequence, 212 residues long: Calaxin (212 aa).

3 consecutive EF-hand domains span residues 65-100, 101-136, and 146-181; these read TDDM…FLRG, TLDE…SLLK, and GIKD…ENLL. 14 residues coordinate Ca(2+): D78, D80, D82, C84, E89, D114, N116, D118, E125, D159, D161, D163, K165, and D170.

As to quaternary structure, component of the outer dynein arm-docking complex along with ODAD1, ODAD2, ODAD3 and ODAD4.

It localises to the cytoplasm. The protein localises to the cytoskeleton. Its subcellular location is the cilium axoneme. It is found in the cell projection. The protein resides in the cilium. It localises to the flagellum. In terms of biological role, component of the outer dynein arm-docking complex (ODA-DC) that mediates outer dynein arms (ODA) binding onto the doublet microtubule. Seems to regulate the assembly of both ODAs and their axonemal docking complex onto ciliary microtubules. Regulates ciliary and flagellar motility and is required for cilia-driven determination of body laterality. This Mus musculus (Mouse) protein is Calaxin (Clxn).